A 294-amino-acid chain; its full sequence is Survival motor neuron protein (294 aa).

Gly residues predominate over residues methionine 1–valine 12. Residues methionine 1–aspartate 32 form a disordered region. N-acetylalanine is present on alanine 2. Serine 4, serine 5, and serine 8 each carry phosphoserine; by PKA. The residue at position 25 (threonine 25) is a Phosphothreonine. Residues glycine 26–lysine 51 are interacts with GEMIN2. Phosphoserine occurs at positions 28 and 31. Lysine 51 is covalently cross-linked (Glycyl lysine isopeptide (Lys-Gly) (interchain with G-Cter in SUMO2)). The segment at isoleucine 59–serine 88 is disordered. A compositionally biased stretch (basic residues) spans threonine 68 to lysine 82. The residue at position 69 (threonine 69) is a Phosphothreonine. Threonine 85 bears the Phosphothreonine; by PKA mark. The Tudor domain occupies glutamine 91–asparagine 151. Residues lysine 97 to lysine 209 form a required for interaction with RPP20/POP7 region. Residues alanine 156–serine 166 show a composition bias toward low complexity. Residues alanine 156–proline 222 are disordered. Serine 187 bears the Phosphoserine; by PKA mark. Residues leucine 194 to arginine 204 show a composition bias toward pro residues. The segment covering glycine 206–asparagine 215 has biased composition (low complexity). Lysine 209 is covalently cross-linked (Glycyl lysine isopeptide (Lys-Gly) (interchain with G-Cter in SUMO2)). Residues proline 240–tryptophan 267 form a P2 (binding site for SNRPB) region. Positions aspartate 252–phenylalanine 280 are involved in homooligomerization. A required for interaction with SYNCRIP region spans residues glycine 279–asparagine 294.

Belongs to the SMN family. In terms of assembly, homooligomer; may form higher order homooligomers in the dimer to octamer range. Part of the core SMN complex that contains SMN1, GEMIN2/SIP1, DDX20/GEMIN3, GEMIN4, GEMIN5, GEMIN6, GEMIN7, GEMIN8 and STRAP/UNRIP. Part of the SMN-Sm complex that contains SMN1, GEMIN2/SIP1, DDX20/GEMIN3, GEMIN4, GEMIN5, GEMIN6, GEMIN7, GEMIN8, STRAP/UNRIP and the Sm proteins SNRPB, SNRPD1, SNRPD2, SNRPD3, SNRPE, SNRPF and SNRPG. Component of an import snRNP complex composed of KPNB1, RNUT1, SMN1 and ZNF259. Interacts with DDX20, FBL, NOLA1, RNUT1, SYNCRIP and with several spliceosomal snRNP core Sm proteins, including SNRPB, SNRPD1, SNRPD2, SNRPD3, SNRPE and ILF3. Interacts with GEMIN2; the interaction is direct. Interacts with GEMIN3; the interaction is direct. Interacts with GEMIN8; the interaction is direct. Interacts with SNRPB; the interaction is direct. Interacts (via Tudor domain) with SNRPD1 (via C-terminus); the interaction is direct. Interacts with SNRPD2; the interaction is direct. Interacts (via Tudor domain) with SNRPD3 (via C-terminus); the interaction is direct. Interacts with SNRPE; the interaction is direct. Interacts with OSTF1, LSM10, LSM11 and RPP20/POP7. Interacts (via C-terminal region) with ZPR1 (via C-terminal region). Interacts (via Tudor domain) with COIL. Interacts with SETX; recruits SETX to POLR2A. Interacts with POLR2A (via the C-terminal domain (CTD)). Interacts with PRMT5. Interacts with XRN2. Interacts (via C-terminus) with FMR1 (via C-terminus); the interaction is direct and occurs in a RNA-independent manner. Interacts (via Tudor domain) with SF3B2 ('Arg-508'-methylated form). Interacts with WRAP53/TCAB1. Interacts (via Tudor domain) with ELAVL4 in an RNA-independent manner; the interaction is required for localization of ELAVL4 to RNA granules. Interacts with FRG1. Does not homooligomerize. Does not interact with SNRPB. In terms of tissue distribution, expressed in a wide variety of tissues. Expressed at high levels in brain, kidney and liver, moderate levels in skeletal and cardiac muscle, and low levels in fibroblasts and lymphocytes. Also seen at high levels in spinal cord. Present in osteoclasts and mononuclear cells (at protein level).

It localises to the nucleus. It is found in the gem. The protein localises to the cajal body. The protein resides in the cytoplasm. Its subcellular location is the cytoplasmic granule. It localises to the perikaryon. It is found in the cell projection. The protein localises to the neuron projection. The protein resides in the axon. Its subcellular location is the myofibril. It localises to the sarcomere. It is found in the z line. Functionally, the SMN complex catalyzes the assembly of small nuclear ribonucleoproteins (snRNPs), the building blocks of the spliceosome, and thereby plays an important role in the splicing of cellular pre-mRNAs. Most spliceosomal snRNPs contain a common set of Sm proteins SNRPB, SNRPD1, SNRPD2, SNRPD3, SNRPE, SNRPF and SNRPG that assemble in a heptameric protein ring on the Sm site of the small nuclear RNA to form the core snRNP (Sm core). In the cytosol, the Sm proteins SNRPD1, SNRPD2, SNRPE, SNRPF and SNRPG are trapped in an inactive 6S pICln-Sm complex by the chaperone CLNS1A that controls the assembly of the core snRNP. To assemble core snRNPs, the SMN complex accepts the trapped 5Sm proteins from CLNS1A forming an intermediate. Within the SMN complex, SMN1 acts as a structural backbone and together with GEMIN2 it gathers the Sm complex subunits. Binding of snRNA inside 5Sm ultimately triggers eviction of the SMN complex, thereby allowing binding of SNRPD3 and SNRPB to complete assembly of the core snRNP. Ensures the correct splicing of U12 intron-containing genes that may be important for normal motor and proprioceptive neurons development. Also required for resolving RNA-DNA hybrids created by RNA polymerase II, that form R-loop in transcription terminal regions, an important step in proper transcription termination. May also play a role in the metabolism of small nucleolar ribonucleoprotein (snoRNPs). The sequence is that of Survival motor neuron protein (SMN1) from Homo sapiens (Human).